We begin with the raw amino-acid sequence, 343 residues long: Transmembrane protein 82 (343 aa).

Transmembrane regions (helical) follow at residues 30-50 (GLIG…YFFV), 77-97 (LAGL…LVVL), 121-141 (LQLY…GLSF), 145-167 (GAPH…GLGA), 203-223 (LLGR…VALI), 233-252 (AMRF…IYMQ), 263-283 (SQVQ…LTVG), and 285-305 (WLDL…LVGV). Residues 320–333 (QRPPVSTPSQPLPS) show a composition bias toward pro residues. The interval 320 to 343 (QRPPVSTPSQPLPSAPQSQSSAPS) is disordered. Low complexity predominate over residues 334 to 343 (APQSQSSAPS).

It belongs to the TMEM82 family.

It is found in the membrane. The protein is Transmembrane protein 82 (TMEM82) of Homo sapiens (Human).